The sequence spans 201 residues: uncharacterized protein (201 aa).

Residues 11–31 form a helical membrane-spanning segment; it reads IIILTIMILTIIIFTRTINGL.

The protein resides in the membrane. This is an uncharacterized protein from Acanthamoeba polyphaga mimivirus (APMV).